Here is a 506-residue protein sequence, read N- to C-terminus: Maturase K (506 aa).

It belongs to the intron maturase 2 family. MatK subfamily.

It localises to the plastid. The protein resides in the chloroplast. In terms of biological role, usually encoded in the trnK tRNA gene intron. Probably assists in splicing its own and other chloroplast group II introns. The polypeptide is Maturase K (Arabis alpina (Alpine rock-cress)).